Consider the following 446-residue polypeptide: Dual specificity mitogen-activated protein kinase kinase 2 (446 aa).

Positions serine 27 to glutamine 42 are enriched in low complexity. Residues serine 27–glycine 51 form a disordered region. A Protein kinase domain is found at leucine 149–isoleucine 414. Residues isoleucine 155–valine 163 and lysine 178 contribute to the ATP site. Aspartate 276 serves as the catalytic Proton acceptor. Position 304 is a phosphoserine; by RAF (serine 304). Residue threonine 308 is modified to Phosphothreonine; by RAF.

It belongs to the protein kinase superfamily. STE Ser/Thr protein kinase family. MAP kinase kinase subfamily. Post-translationally, MAPKK is itself dependent on Ser/Thr phosphorylation for activity catalyzed by MAP kinase kinase kinases. Expressed abundantly in the adult brain and muscle.

It catalyses the reaction L-seryl-[protein] + ATP = O-phospho-L-seryl-[protein] + ADP + H(+). The enzyme catalyses L-threonyl-[protein] + ATP = O-phospho-L-threonyl-[protein] + ADP + H(+). The catalysed reaction is L-tyrosyl-[protein] + ATP = O-phospho-L-tyrosyl-[protein] + ADP + H(+). Functionally, catalyzes the concomitant phosphorylation of a threonine and a tyrosine residue in a Thr-Glu-Tyr sequence located in MAP kinases. The sequence is that of Dual specificity mitogen-activated protein kinase kinase 2 (map2k2) from Xenopus laevis (African clawed frog).